The primary structure comprises 368 residues: RAB6-interacting golgin (368 aa).

Disordered regions lie at residues 1-43 (MAQD…REKA), 55-133 (DGSA…DCKV), and 302-368 (KQMA…AVAT). The span at 11 to 27 (EELRRLKQNKDPFEPQR) shows a compositional bias: basic and acidic residues. A compositionally biased stretch (pro residues) spans 80 to 89 (SPSPVAPSPL). Residues 114–133 (NSHHGHKSAEVRAPKPDCKV) show a composition bias toward basic and acidic residues. Residues 145-310 (RWEVLQQEQR…AKQMASVERL (166 aa)) adopt a coiled-coil conformation. A necessary for interaction with RCHY1 region spans residues 188–368 (IQKELQALDD…AKNFSAAVAT (181 aa)).

It belongs to the GORAB family. Interacts with RCHY1. Interacts with SCYL1 and RAB6A/RAB6. In terms of tissue distribution, expressed in small intestine, kidney, skeletal muscle, lung, spleen, brain and heart. High expression is observed in osteoblasts and skin; also expressed in osteoclasts albeit at lower levels.

The protein resides in the cytoplasm. The protein localises to the golgi apparatus. The sequence is that of RAB6-interacting golgin (Gorab) from Mus musculus (Mouse).